Here is a 648-residue protein sequence, read N- to C-terminus: DNA gyrase subunit B (648 aa).

Positions 433-547 (SELYIVEGDS…KGHVYIAQPP (115 aa)) constitute a Toprim domain. Residues Glu-439, Asp-512, and Asp-514 each contribute to the Mg(2+) site.

This sequence belongs to the type II topoisomerase GyrB family. Heterotetramer, composed of two GyrA and two GyrB chains. In the heterotetramer, GyrA contains the active site tyrosine that forms a transient covalent intermediate with DNA, while GyrB binds cofactors and catalyzes ATP hydrolysis. Requires Mg(2+) as cofactor. The cofactor is Mn(2+). It depends on Ca(2+) as a cofactor.

The protein localises to the cytoplasm. It carries out the reaction ATP-dependent breakage, passage and rejoining of double-stranded DNA.. In terms of biological role, a type II topoisomerase that negatively supercoils closed circular double-stranded (ds) DNA in an ATP-dependent manner to modulate DNA topology and maintain chromosomes in an underwound state. Negative supercoiling favors strand separation, and DNA replication, transcription, recombination and repair, all of which involve strand separation. Also able to catalyze the interconversion of other topological isomers of dsDNA rings, including catenanes and knotted rings. Type II topoisomerases break and join 2 DNA strands simultaneously in an ATP-dependent manner. The protein is DNA gyrase subunit B of Mycoplasmoides gallisepticum (strain R(low / passage 15 / clone 2)) (Mycoplasma gallisepticum).